Here is a 393-residue protein sequence, read N- to C-terminus: Small ribosomal subunit protein bS1 (393 aa).

4 consecutive S1 motif domains span residues 16 to 90 (GDKV…LSKR), 108 to 173 (NQTI…LSRK), 194 to 262 (GDVI…LSIK), and 279 to 348 (GDVI…LSIK). A compositionally biased stretch (polar residues) spans 356–369 (VIESDSETTQSYLD). A disordered region spans residues 356 to 381 (VIESDSETTQSYLDNGSDDEDNPTLG).

The protein belongs to the bacterial ribosomal protein bS1 family.

Functionally, binds mRNA; thus facilitating recognition of the initiation point. It is needed to translate mRNA with a short Shine-Dalgarno (SD) purine-rich sequence. The sequence is that of Small ribosomal subunit protein bS1 (rpsA) from Staphylococcus saprophyticus subsp. saprophyticus (strain ATCC 15305 / DSM 20229 / NCIMB 8711 / NCTC 7292 / S-41).